We begin with the raw amino-acid sequence, 142 residues long: Protein lin-32 (142 aa).

Residues 30–48 (PLQSPNFSLDSPNYPDSLS) are compositionally biased toward polar residues. The interval 30-66 (PLQSPNFSLDSPNYPDSLSNGGGKDDKKKCRRYKTPS) is disordered. The bHLH domain maps to 72-124 (MRRSAANERERRRMNTLNVAYDELREVLPEIDSGKKLSKFETLQMAQKYIECL).

Forms a heterodimer with hlh-2. Expressed in PVD motor neurons.

It is found in the nucleus. In terms of biological role, probable transcription factor which binds the E box motif 5'-CA[TC][AG]TG-3'. Essential for the specification of the neuroblast cell fate in the development of peripheral sense organs. Its role in the generation of sensory neurons may be through positively regulating the expression of the zinc finger protein ztf-11 during postdeirid neurogenesis. Required for specification of cell fate, acting in concert with lin-32, in the development of the male-specific genital sensilla (simple sense organs) known as rays. Involved in regulating glial specification, perhaps by suppressing a glial fate in different lineages during early embryogenesis. This is Protein lin-32 from Caenorhabditis elegans.